Here is an 89-residue protein sequence, read N- to C-terminus: Barrier-to-autointegration factor (89 aa).

Residue M1 is modified to N-acetylmethionine. The residue at position 2 (T2) is an N-acetylthreonine; in Barrier-to-autointegration factor, N-terminally processed. A phosphothreonine; by VRK1 and VRK2 mark is found at T2 and T3. S4 carries the phosphoserine; by VRK1 and VRK2 modification. One can recognise a HhH domain in the interval 20-35 (VGSLAGIGDVLSKRLE).

The protein belongs to the BAF family. Homodimer. Heterodimerizes with BANF2. Interacts with ANKLE2/LEM4, leading to decreased phosphorylation by VRK1 and promoting dephosphorylation by protein phosphatase 2A (PP2A). Binds non-specifically to double-stranded DNA, and is found as a hexamer or dodecamer upon DNA binding. Binds to LEM domain-containing nuclear proteins such as LEMD3/MAN1, TMPO/LAP2 and EMD (emerin). Interacts with ANKLE1 (via LEM domain); the interaction may favor BANF1 dimerization. Interacts with CRX and LMNA (lamin-A). Binds linker histone H1.1 and core histones H3. Interacts with LEMD2 (via LEM domain). Interacts with PARP1; interaction takes place in response to oxidative DNA damage. Post-translationally, ser-4 is the major site of phosphorylation as compared to Thr-2 and Thr-3. Phosphorylation on Thr-2; Thr-3 and Ser-4 disrupts its ability to bind DNA and reduces its ability to bind LEM domain-containing proteins. Non phosphorylated BAF seems to enhance binding between EMD and LMNA. Dephosphorylated by protein phosphatase 2A (PP2A) following interaction with ANKLE2/LEM4 during mitotic exit, leading to mitotic nuclear envelope reassembly.

It localises to the nucleus. It is found in the chromosome. Its subcellular location is the nucleus envelope. The protein resides in the cytoplasm. In terms of biological role, non-specific DNA-binding protein that plays key roles in mitotic nuclear reassembly, chromatin organization, DNA damage response, gene expression and intrinsic immunity against foreign DNA. Contains two non-specific double-stranded DNA (dsDNA)-binding sites which promote DNA cross-bridging. Plays a key role in nuclear membrane reformation at the end of mitosis by driving formation of a single nucleus in a spindle-independent manner. Transiently cross-bridges anaphase chromosomes via its ability to bridge distant DNA sites, leading to the formation of a dense chromatin network at the chromosome ensemble surface that limits membranes to the surface. Also acts as a negative regulator of innate immune activation by restricting CGAS activity toward self-DNA upon acute loss of nuclear membrane integrity. Outcompetes CGAS for DNA-binding, thereby preventing CGAS activation and subsequent damaging autoinflammatory responses. Also involved in DNA damage response: interacts with PARP1 in response to oxidative stress, thereby inhibiting the ADP-ribosyltransferase activity of PARP1. Involved in the recognition of exogenous dsDNA in the cytosol: associates with exogenous dsDNA immediately after its appearance in the cytosol at endosome breakdown and is required to avoid autophagy. The protein is Barrier-to-autointegration factor of Mus musculus (Mouse).